The following is a 378-amino-acid chain: tRNA-specific 2-thiouridylase MnmA (378 aa).

ATP-binding positions include G7 to S14 and M33. The interaction with target base in tRNA stretch occupies residues N102–D104. Catalysis depends on C107, which acts as the Nucleophile. C107 and C209 form a disulfide bridge. Residue G132 coordinates ATP. Positions K159–Q161 are interaction with tRNA. C209 acts as the Cysteine persulfide intermediate in catalysis. An interaction with tRNA region spans residues R316–Y317.

It belongs to the MnmA/TRMU family.

It is found in the cytoplasm. It carries out the reaction S-sulfanyl-L-cysteinyl-[protein] + uridine(34) in tRNA + AH2 + ATP = 2-thiouridine(34) in tRNA + L-cysteinyl-[protein] + A + AMP + diphosphate + H(+). In terms of biological role, catalyzes the 2-thiolation of uridine at the wobble position (U34) of tRNA, leading to the formation of s(2)U34. The protein is tRNA-specific 2-thiouridylase MnmA of Onion yellows phytoplasma (strain OY-M).